The sequence spans 429 residues: uncharacterized protein (429 aa).

A run of 11 helical transmembrane segments spans residues 27 to 47 (PFFF…QSIG), 48 to 68 (GIMT…VSIL), 78 to 98 (ILLC…YWVF), 106 to 126 (IFIL…FLAL), 142 to 162 (ALII…PAII), 198 to 218 (LLLA…TIVI), 219 to 239 (AILT…CFYF), 249 to 269 (VLLS…YFLD), 288 to 308 (FIVG…FGYL), 351 to 371 (LILD…IYFI), and 399 to 419 (FFIS…LIIL).

The protein localises to the cell membrane. Its function is as follows. May function as a transporter. This is an uncharacterized protein from Klebsiella pneumoniae.